A 1485-amino-acid polypeptide reads, in one-letter code: Sex-determining transformer protein 2 (1485 aa).

An N-terminal signal peptide occupies residues 1-28; it reads MSLRSNKLLVAAVIFTVVTFGLLLTSSI. The next 9 membrane-spanning stretches (helical) occupy residues 438-458, 490-510, 584-604, 732-752, 923-943, 950-970, 980-1000, 1033-1053, and 1063-1083; these read VVYFILFIRCVLLIFFAFFAW, IELNSELLGYIILLTIVNTYL, WPFISILFVPITGCYWYFVDI, GILLYGSAVLFVLLSVAVMLI, LLASGILSAFFALIVVIFSIT, LIFSFFVIGSRLEIAAVISLF, DSAVLVGFLVAWAPFYELSLF, AQVFAIVLAASLIIAVVAGVV, and TVILIVVQLVAFGNSIAVLVA. Positions 1131 to 1271 are interaction with fem-3; that stretch reads DFHIRPTNMS…MLHMIEKVQK (141 aa). Residues 1143 to 1175 are disordered; it reads YAPPPAKKRAKQTNNETDPEKKEDEPGTSNANN. Residues 1181–1201 form a helical membrane-spanning segment; the sequence is AAHRLAILPWHFVLGGIPVDL. Disordered regions lie at residues 1228–1252, 1275–1306, and 1348–1384; these read SELEDQDDYSSESSVEDVESDPAPE, EKEAKEKVHQVESAQRRAPNFDDPNVAGPSHR, and EMPPVIDRTIPRDPRTEPPNLQECIQQNDDPSLPPHP. Positions 1275–1284 are enriched in basic and acidic residues; sequence EKEAKEKVHQ. Residues 1401 to 1422 form an MX regulatory domain; required for tra-1 binding region; sequence CEDVYWTYNDGRLPPNVAMPPR. The segment at 1442–1485 is disordered; the sequence is PPGQPSIPIPAEAMALREERARAHREQEQRDNSQSPSPSPEPGL. Residues 1456 to 1472 show a composition bias toward basic and acidic residues; that stretch reads ALREERARAHREQEQRD.

As to quaternary structure, interacts with tra-1 and fem-3. As to expression, somatic and germline tissues.

The protein resides in the membrane. Its function is as follows. Plays a major role in controlling sexual cell fates. Promotes female development in XX animals where it sequesters one or more of the FEM proteins to the membrane thereby freeing the tra-1 protein (a putative transcription factor) to enter the nucleus and promote female development. In XO animals it acts as a receptor for her-1 which prevents it from binding to FEM proteins thereby repressing the activity of tra-1. Negatively regulates male development when bound to fem-3 and is required together with tra-1 for promoting spermatogenesis. The protein is Sex-determining transformer protein 2 of Caenorhabditis remanei (Caenorhabditis vulgaris).